We begin with the raw amino-acid sequence, 523 residues long: Flavonoid 3',5'-hydroxylase (523 aa).

Cys-460 provides a ligand contact to heme.

Belongs to the cytochrome P450 family. The cofactor is heme.

It carries out the reaction a 3',5'-unsubstituted flavanone + 2 reduced [NADPH--hemoprotein reductase] + 2 O2 = a 3',5'-dihydroxyflavanone + 2 oxidized [NADPH--hemoprotein reductase] + 2 H2O + 2 H(+). Its pathway is pigment biosynthesis; anthocyanin biosynthesis. Catalyzes the 3'5'-hydroxylation of naringenin and eriodictyol to form 5,7,3,'4',5'-pentahydroxyflavanone and 3',5'-hydroxylation of dihydrokaempferol and dihydroquercetin to form dihydromyricetin. The polypeptide is Flavonoid 3',5'-hydroxylase (CYP75A6) (Campanula medium (Canterbury bells)).